We begin with the raw amino-acid sequence, 367 residues long: Methionine aminopeptidase 1 (367 aa).

The C6H2-type zinc-finger motif lies at 3 to 57 (GILCASPGCGKPAKLQCPTCVNLKLETPSHFCSQECFKTFWPLHKMYHQKGQPEN). 8 residues coordinate Zn(2+): C6, C11, C19, C22, C34, C38, H46, and H50. Residue H185 participates in a protein binding. Zn(2+)-binding residues include D202, D213, and H276. An a protein-binding site is contributed by H283. The Zn(2+) site is built by E309 and E340.

The protein belongs to the peptidase M24A family. Methionine aminopeptidase type 1 subfamily. As to quaternary structure, associates with the 60S ribosomal subunit of the 80S translational complex. Requires Zn(2+) as cofactor. The cofactor is Co(2+). It depends on Mn(2+) as a cofactor. Fe(2+) is required as a cofactor.

The protein resides in the cytoplasm. The enzyme catalyses Release of N-terminal amino acids, preferentially methionine, from peptides and arylamides.. Cotranslationally removes the N-terminal methionine from nascent proteins. The N-terminal methionine is often cleaved when the second residue in the primary sequence is small and uncharged (Met-Ala-, Cys, Gly, Pro, Ser, Thr, or Val). The chain is Methionine aminopeptidase 1 (metap1) from Dictyostelium discoideum (Social amoeba).